Consider the following 1207-residue polypeptide: MEMLTKFESRSSRAKGVAFHPTQPWILTSLHNGRIQLWDYRMGTLLDRFDGHDGPVRGIAFHPTQPLFVSGGDDYKVNVWNYKSRKLLFSLCGHMDYVRVCTFHHEYPWILSCSDDQTIRIWNWQSRNCIAILTGHSHYVMCAAFHPSEDLIVSASLDQTVRVWDISGLRMKNAAPVSMSLEDQLAQAHNSISNDLFGSTDAIVKFVLEGHDRGVNWCAFHPTLPLILSAGDDRLVKLWRMTASKAWEVDTCRGHFNNVSCCLFHPHQELILSASEDKTIRVWDLNRRTAVQTFRRDNDRFWFITVHPKLNLFAAAHDSGVMVFKLERERPAHALNINTLLYVNKEKSIVSYDLLRAQSTTVASVKHLGSAWLPPRSLSYNPAEKVALLTSSADNGVYELVNVSSRSNSLPLKDNIKGPGDDAIFVARNRFAVFSRSDQTIEIKDLSNKVTKTIQLPEKTRDIFFAGMGHVLLSTATQVHLFDLQQKKIVSSFNANRVKYVVWSNDNSQAALLGKHYVYIVKKNLELITSIHETIRIKSAVWVENNVLLYATLDHLKYALMSGDTGVIKTLESTLYLVKAKGNMVFALNRAAEPVSFEIDPTEYLFKLALLRKDYEQVLHLIQNSNLVGQAIIAYLQKKGYPEIALQFVEDPSTRFELALECGNLETALELARTIDRPEVWSRLASDAMSYGNHKIAEITFQKLRYFEKLSFLYLITGNAEKLQKMAIIAEKRNDTLSLFQNSLYLNEVESRINILEQAGMYPIAYLTAKSNGLEEKAQQILSHCNKTEEEIKLPSLGSAFTTPVPVNETYTHNWPLLDTSHSTFEKSLQERMEQLAIERQEEQESEEEYEEVEQSLMDVVDEMSDLAESVPEEEVDGWEVEDLAPEEAVNDVVDDASAFVGADEIFLWKRNSPLAADHIAAGDFESAMKILNKQVGAINFSPLKTRFLEIYTASRVYLPTISGLDPLVSYVRRNAETAERSQALPFITRNLASIKSHELHEAYRLVKANKILEAQICFRSIIYLALTTVANSEEEADEISALIDECCRYIVALSCELERRRLGEEDTKRALELSYYFASADLQPMHSIIALRLAINASHKLKNYKSASFLGNKLLQLAESGPAAEAANRAITLGDRNPHDAFEIEYDPHVEMRICPKTLTPVYSGDDFDVCSVCGAVYHKGYVNEVCTVCDVGGIGQKGTGRRFFA.

8 WD repeats span residues Ser9 to Asp50, Gly51 to Ser90, Gly93 to Thr134, Gly135 to Ala174, Gly210 to Val249, Gly254 to Thr293, Arg296 to Asn336, and Ser370 to Pro411. A phosphoserine mark is found at Ser409 and Ser942.

Oligomeric complex that consists of at least the alpha, beta, beta', gamma, delta, epsilon and zeta subunits.

It localises to the cytoplasm. Its subcellular location is the golgi apparatus membrane. Its function is as follows. The coatomer is a cytosolic protein complex that binds to dilysine motifs and reversibly associates with Golgi non-clathrin-coated vesicles, which further mediate biosynthetic protein transport from the ER, via the Golgi up to the trans Golgi network. Coatomer complex is required for budding from Golgi membranes, and is essential for the retrograde Golgi-to-ER transport of dilysine-tagged proteins. The polypeptide is Putative coatomer subunit alpha (Schizosaccharomyces pombe (strain 972 / ATCC 24843) (Fission yeast)).